Here is a 240-residue protein sequence, read N- to C-terminus: tRNA pseudouridine synthase A (240 aa).

Catalysis depends on Asp-50, which acts as the Nucleophile. Residue Tyr-109 participates in substrate binding.

The protein belongs to the tRNA pseudouridine synthase TruA family. Homodimer.

The catalysed reaction is uridine(38/39/40) in tRNA = pseudouridine(38/39/40) in tRNA. Its function is as follows. Formation of pseudouridine at positions 38, 39 and 40 in the anticodon stem and loop of transfer RNAs. In Campylobacter jejuni subsp. jejuni serotype O:6 (strain 81116 / NCTC 11828), this protein is tRNA pseudouridine synthase A.